The sequence spans 246 residues: Ly6/PLAUR domain-containing protein 4 (246 aa).

The signal sequence occupies residues 1 to 26; it reads MGPQHLRLVQLFCLLGAISTLPRAGA. Asn117 carries N-linked (GlcNAc...) asparagine glycosylation. The UPAR/Ly6 domain maps to 142–223; the sequence is CPTCVGEHMK…LNILEKSQIV (82 aa). A lipid anchor (GPI-anchor amidated alanine) is attached at Ala225. Residues 226-246 constitute a propeptide, removed in mature form; it reads ASSRQDPAWGVVLGLLFAFRD.

Its subcellular location is the cell membrane. In Homo sapiens (Human), this protein is Ly6/PLAUR domain-containing protein 4 (LYPD4).